The sequence spans 1575 residues: Mediator of RNA polymerase II transcription subunit 1 (1575 aa).

An interaction with the Mediator complex and THRA region spans residues 1 to 670; that stretch reads MKAQGETEDS…YGSSPLERQN (670 aa). Residues 16–590 are interaction with ESR1; that stretch reads MSSLLERLHA…SIKDRHESVG (575 aa). Interaction with the Mediator complex stretches follow at residues 108–212 and 215–390; these read FYVE…GYLT and SGGH…SLQG. Residues 405-644 form an interaction with THRA region; the sequence is PLILNMIRHQ…MAGNTKNHPM (240 aa). Positions 542–789 are interaction with VDR; it reads PASSPGYGMT…TDILSDIAEE (248 aa). Position 588 is a phosphoserine (S588). Residues 604-608 carry the LXXLL motif 1 motif; sequence LTSLL. 5 disordered regions span residues 609–706, 737–760, 791–818, 874–895, and 951–1564; these read QITG…QTED, HITPAPSQCSTPPATYPQPVSHPQ, SKLPSTSDDCPPIGTPVRDSSSSGHSQS, SQSGFGEEYFDESSQSGDNDDF, and SGSQ…GEED. Pro residues predominate over residues 622–632; that stretch reads PTPPHHTPPPV. The interval 622-701 is interaction with GATA1; sequence PTPPHHTPPP…SSRVPPDKPK (80 aa). The segment at 622-701 is interaction with PPARGC1A and THRA; sequence PTPPHHTPPP…SSRVPPDKPK (80 aa). The LXXLL motif 2 signature appears at 645–649; it reads LMNLL. Residues 655-675 are compositionally biased toward polar residues; that stretch reads QDFSTLYGSSPLERQNSSSGS. The segment at 656–1066 is interaction with ESR1; the sequence is DFSTLYGSSP…TPPIPKITIQ (411 aa). Phosphoserine is present on S664. Basic and acidic residues predominate over residues 696 to 706; the sequence is PPDKPKHQTED. Residue S795 is modified to Phosphoserine. T805 carries the post-translational modification Phosphothreonine. Residues 808 to 818 are compositionally biased toward polar residues; that stretch reads RDSSSSGHSQS. The Integrase domain-binding motif (IBM) signature appears at 875-902; sequence QSGFGEEYFDESSQSGDNDDFKGFASQA. S887, S953, and S955 each carry phosphoserine. Residues 963-974 show a composition bias toward basic and acidic residues; the sequence is LGKEKTQKRVKE. Residues 976–986 show a composition bias toward gly residues; the sequence is NGTGASSGSGP. The residue at position 1032 (T1032) is a Phosphothreonine; by MAPK1 or MAPK3. Positions 1034 to 1051 are enriched in low complexity; the sequence is PTSTGGSKSPGSSGRSQT. 2 positions are modified to phosphothreonine: T1051 and T1057. Composition is skewed to low complexity over residues 1078-1094 and 1101-1152; these read SSHSQYTSSGSVSSSGS and SSSS…SQTG. The residue at position 1158 (S1158) is a Phosphoserine. The span at 1158 to 1184 shows a compositional bias: polar residues; that stretch reads SPITKHGLSSGSSSTKMKPQGKPSSLM. K1179 is subject to N6-acetyllysine. Residues 1185-1197 are compositionally biased toward low complexity; it reads NPSISKPNISPSH. At S1209 the chain carries Phosphoserine. T1217 is modified (phosphothreonine). 2 stretches are compositionally biased toward low complexity: residues 1220–1258 and 1265–1295; these read SSKAKSPISSGSSGSHVSGTSSSSGMKSSSGSASSGSVS and SNSCTPSSSSFSSSGSSMSSSQNQHGSSKGK. A Phosphoserine modification is found at S1225. An interaction with TP53 region spans residues 1251 to 1423; the sequence is SASSGSVSQK…KPGESGGDGL (173 aa). S1304 and S1349 each carry phosphoserine. Over residues 1331-1352 the composition is skewed to polar residues; that stretch reads MGASTNSSNHPMSSKHNTSGGE. Over residues 1354 to 1366 the composition is skewed to basic and acidic residues; that stretch reads QSKREKSDKDKSK. A phosphoserine mark is found at S1405 and S1435. 2 stretches are compositionally biased toward polar residues: residues 1427–1442 and 1450–1484; these read IASSKNYGSPLISGST and PSHSKSPAYTPQNVDSESESGSSIAERSYQNSPSS. At T1442 the chain carries Phosphothreonine. A Phosphothreonine; by MAPK1 or MAPK3 modification is found at T1459. Phosphoserine is present on residues S1465, S1467, S1481, S1483, and S1484. The span at 1498-1507 shows a compositional bias: basic residues; sequence KHKKHKKEKK. Residue K1523 is modified to N6-acetyllysine. The segment covering 1527–1545 has biased composition (polar residues); the sequence is WSKSPISSDPTASVTNNPI.

This sequence belongs to the Mediator complex subunit 1 family. As to quaternary structure, component of the Mediator complex, which is composed of MED1, MED4, MED6, MED7, MED8, MED9, MED10, MED11, MED12, MED13, MED13L, MED14, MED15, MED16, MED17, MED18, MED19, MED20, MED21, MED22, MED23, MED24, MED25, MED26, MED27, MED29, MED30, MED31, CCNC, CDK8 and CDC2L6/CDK11. The MED12, MED13, CCNC and CDK8 subunits form a distinct module termed the CDK8 module. Mediator containing the CDK8 module is less active than Mediator lacking this module in supporting transcriptional activation. Individual preparations of the Mediator complex lacking one or more distinct subunits have been variously termed ARC, CRSP, DRIP, PC2, SMCC and TRAP. This subunit specifically interacts with a number of nuclear receptors in a ligand-dependent fashion including AR, ESR1, ESR2, PPARA, PPARG, RORA, RXRA, RXRG, THRA, THRB and VDR. Interacts with CTNNB1, GABPA, GLI3, PPARGC1A and TP53. Interacts with GATA1 and YWHAH. Interacts with CLOCK; this interaction requires the presence of THRAP3. Interacts with CCAR1. Interacts with NR4A3. Interacts (via IBM motif) with PSIP1 (via IBD domain); phosphorylation increases its affinity for PSIP1. Interacts with USP22. In terms of processing, phosphorylated by MAPK1 or MAPK3 during G2/M phase which may enhance protein stability and promote entry into the nucleolus. Phosphorylation increases its interaction with PSIP1. In terms of tissue distribution, widely expressed in the adult, with high levels of expression in the liver, lung, intestinal mucosa, kidney cortex, thymic cortex, splenic follicle and seminiferous epithelium in testis. Also expressed in the adult heart, brain, spleen and skeletal muscle.

The protein resides in the nucleus. Its function is as follows. Component of the Mediator complex, a coactivator involved in the regulated transcription of nearly all RNA polymerase II-dependent genes. Mediator functions as a bridge to convey information from gene-specific regulatory proteins to the basal RNA polymerase II transcription machinery. Mediator is recruited to promoters by direct interactions with regulatory proteins and serves as a scaffold for the assembly of a functional preinitiation complex with RNA polymerase II and the general transcription factors. Essential for embryogenesis, including development of the central nervous system, heart, liver and placenta and for erythropoiesis. Also required for normal transcriptional control of thyroid-stimulating hormone beta (TSHB) in the pituitary. Acts as a coactivator for GATA1-mediated transcriptional activation during erythroid differentiation of K562 erythroleukemia cells. The protein is Mediator of RNA polymerase II transcription subunit 1 (Med1) of Mus musculus (Mouse).